The chain runs to 121 residues: Ribosome-binding factor A (121 aa).

This sequence belongs to the RbfA family. As to quaternary structure, monomer. Binds 30S ribosomal subunits, but not 50S ribosomal subunits or 70S ribosomes.

Its subcellular location is the cytoplasm. One of several proteins that assist in the late maturation steps of the functional core of the 30S ribosomal subunit. Associates with free 30S ribosomal subunits (but not with 30S subunits that are part of 70S ribosomes or polysomes). Required for efficient processing of 16S rRNA. May interact with the 5'-terminal helix region of 16S rRNA. The polypeptide is Ribosome-binding factor A (Clostridium acetobutylicum (strain ATCC 824 / DSM 792 / JCM 1419 / IAM 19013 / LMG 5710 / NBRC 13948 / NRRL B-527 / VKM B-1787 / 2291 / W)).